A 499-amino-acid polypeptide reads, in one-letter code: ATP synthase subunit alpha, chloroplastic (499 aa).

Residue 170-177 (GDRQTGKT) participates in ATP binding.

It belongs to the ATPase alpha/beta chains family. In terms of assembly, F-type ATPases have 2 components, CF(1) - the catalytic core - and CF(0) - the membrane proton channel. CF(1) has five subunits: alpha(3), beta(3), gamma(1), delta(1), epsilon(1). CF(0) has four main subunits: a, b, b' and c.

The protein localises to the plastid. Its subcellular location is the chloroplast thylakoid membrane. The enzyme catalyses ATP + H2O + 4 H(+)(in) = ADP + phosphate + 5 H(+)(out). In terms of biological role, produces ATP from ADP in the presence of a proton gradient across the membrane. The alpha chain is a regulatory subunit. The protein is ATP synthase subunit alpha, chloroplastic of Emiliania huxleyi (Coccolithophore).